The sequence spans 593 residues: Double-stranded RNA-binding protein 2 (593 aa).

DRBM domains follow at residues 1 to 70 (MYKN…ELSK) and 87 to 155 (IYKN…ELKQ). Over residues 188–197 (LNQTNGGKTP) the composition is skewed to polar residues. 3 disordered regions span residues 188 to 221 (LNQT…KSNA), 357 to 408 (APDF…ESNQ), and 546 to 593 (VNSS…KLHI). The span at 205–219 (SSNRPSSRRPSYPKS) shows a compositional bias: low complexity. The segment covering 378 to 408 (ESSPASEQESKSHTASSSATRSPSQQLESNQ) has biased composition (polar residues). Over residues 572–586 (RTNTSDTSNAATASS) the composition is skewed to low complexity.

In terms of biological role, binds double-stranded RNA. The polypeptide is Double-stranded RNA-binding protein 2 (DRB2) (Oryza sativa subsp. japonica (Rice)).